A 742-amino-acid chain; its full sequence is Two-component response regulator-like PRR37 (742 aa).

Residues K63–W181 enclose the Response regulatory domain. A compositionally biased stretch (low complexity) spans S186–G195. Disordered regions lie at residues S186–K249, P290–N346, D375–N402, M478–N570, N590–M671, and N697–R742. The segment covering D236–T248 has biased composition (polar residues). Basic and acidic residues predominate over residues K299–E313. Over residues R318–E330 the composition is skewed to polar residues. The span at R331 to E341 shows a compositional bias: basic and acidic residues. Over residues A380–S390 the composition is skewed to polar residues. Over residues G490 to S502 the composition is skewed to low complexity. Residues T503 to S512 show a composition bias toward polar residues. Over residues N618–S634 the composition is skewed to low complexity. Positions G656–S667 are enriched in gly residues. The 43-residue stretch at R682–Q724 folds into the CCT domain. Basic residues predominate over residues N697–K708. A compositionally biased stretch (low complexity) spans G719–Q731.

It belongs to the ARR-like family.

The protein resides in the nucleus. Functionally, controls photoperiodic flowering response. Seems to be one of the component of the circadian clock. Expression of several members of the ARR-like family is controlled by circadian rhythm. The particular coordinated sequential expression of PRR73, PRR37, PRR95, PRR59 and PPR1 result to circadian waves that may be at the basis of the endogenous circadian clock. In Oryza sativa subsp. indica (Rice), this protein is Two-component response regulator-like PRR37 (PRR37).